A 179-amino-acid polypeptide reads, in one-letter code: Macro domain-containing protein XCC3184 (179 aa).

Residues Met1–Glu175 form the Macro domain.

This sequence belongs to the MacroD-type family.

The protein is Macro domain-containing protein XCC3184 of Xanthomonas campestris pv. campestris (strain ATCC 33913 / DSM 3586 / NCPPB 528 / LMG 568 / P 25).